Consider the following 318-residue polypeptide: Thymidylate synthase (318 aa).

DUMP-binding positions include Arg-25 and Arg-180–Arg-181. Cys-200 acts as the Nucleophile in catalysis. Residues Arg-220–Asp-223, Asn-231, and His-261–Tyr-263 each bind dUMP. Asp-223 contributes to the (6R)-5,10-methylene-5,6,7,8-tetrahydrofolate binding site. Ala-317 contacts (6R)-5,10-methylene-5,6,7,8-tetrahydrofolate.

Belongs to the thymidylate synthase family. Bacterial-type ThyA subfamily. Homodimer.

It localises to the cytoplasm. It carries out the reaction dUMP + (6R)-5,10-methylene-5,6,7,8-tetrahydrofolate = 7,8-dihydrofolate + dTMP. It functions in the pathway pyrimidine metabolism; dTTP biosynthesis. In terms of biological role, catalyzes the reductive methylation of 2'-deoxyuridine-5'-monophosphate (dUMP) to 2'-deoxythymidine-5'-monophosphate (dTMP) while utilizing 5,10-methylenetetrahydrofolate (mTHF) as the methyl donor and reductant in the reaction, yielding dihydrofolate (DHF) as a by-product. This enzymatic reaction provides an intracellular de novo source of dTMP, an essential precursor for DNA biosynthesis. The protein is Thymidylate synthase of Lactobacillus delbrueckii subsp. bulgaricus (strain ATCC BAA-365 / Lb-18).